Here is a 555-residue protein sequence, read N- to C-terminus: Suppressor of tumorigenicity 7 protein-like (555 aa).

The next 2 membrane-spanning stretches (helical) occupy residues 36–56 (GLAGTGASLWFVAGLGLLYAL) and 80–100 (FYVALTGTSSLISGLIFIFEW). Residues 126-148 (TESSISEPGSPSNNRESETSRQN) form a disordered region.

Belongs to the ST7 family.

Its subcellular location is the membrane. This Bos taurus (Bovine) protein is Suppressor of tumorigenicity 7 protein-like (ST7L).